We begin with the raw amino-acid sequence, 77 residues long: Apelin (77 aa).

Residues 1 to 22 (MNLRRCVQALLLLWLCLSAVCG) form the signal peptide. The propeptide occupies 23–41 (GPLLQTSDGKEMEEGTIRY). A disordered region spans residues 43-77 (VQPRGPRSGPGPWQGGRRKFRRQRPRLSHKGPMPF). The span at 58–71 (GRRKFRRQRPRLSH) shows a compositional bias: basic residues. The residue at position 65 (Gln-65) is a Pyrrolidone carboxylic acid.

It belongs to the apelin family. At least 5 active peptides may be produced by proteolytic processing of the peptide precursor.

The protein localises to the secreted. It localises to the extracellular space. Its function is as follows. Peptide hormone that functions as endogenous ligand for the G-protein-coupled apelin receptor (APLNR/APJ), that plays a role in cadiovascular homeostasis. Functions as a balanced agonist activating both G(i) protein pathway and beta-arrestin pathway of APLNR. Downstream G proteins activation, apelin can inhibit cAMP production and activate key intracellular effectors such as ERKs. On the other hand, APLNR activation induces beta-arrestin recruitment to the membrane leading to desensitization and internalization of the receptor. Apelin blunts cardiac hypertrophic induction from APLNR on response to pathological stimuli, but also induces myocardial hypertrophy under normal conditions. Apelin-36 dissociates more hardly than (pyroglu)apelin-13 from APLNR. Involved in the regulation of cardiac precursor cell movements during gastrulation and heart morphogenesis. Has an inhibitory effect on cytokine production in response to T-cell receptor/CD3 cross-linking; the oral intake of apelin in the colostrum and the milk might therefore modulate immune responses in neonates. Plays a role in early coronary blood vessels formation. Mediates myocardial contractility in an ERK1/2-dependent manner. May also have a role in the central control of body fluid homeostasis by influencing vasopressin release and drinking behavior. The polypeptide is Apelin (APLN) (Bos taurus (Bovine)).